Consider the following 344-residue polypeptide: GTPase Obg (344 aa).

The Obg domain occupies 1 to 159 (MKFLDLCKVY…RTLWLRLKLI (159 aa)). The disordered stretch occupies residues 126–146 (GNLHFKSSTNQAPRRSNPGQD). The span at 130-144 (FKSSTNQAPRRSNPG) shows a compositional bias: polar residues. The region spanning 160–327 (ADVGLLGLPN…VLRKLRGEIS (168 aa)) is the OBG-type G domain. GTP is bound by residues 166–173 (GLPNAGKS), 191–195 (FTTLH), 212–215 (DIPG), 279–282 (NKID), and 308–310 (SGV). 2 residues coordinate Mg(2+): Ser-173 and Thr-193.

This sequence belongs to the TRAFAC class OBG-HflX-like GTPase superfamily. OBG GTPase family. As to quaternary structure, monomer. Requires Mg(2+) as cofactor.

The protein resides in the cytoplasm. An essential GTPase which binds GTP, GDP and possibly (p)ppGpp with moderate affinity, with high nucleotide exchange rates and a fairly low GTP hydrolysis rate. Plays a role in control of the cell cycle, stress response, ribosome biogenesis and in those bacteria that undergo differentiation, in morphogenesis control. This chain is GTPase Obg, found in Roseobacter denitrificans (strain ATCC 33942 / OCh 114) (Erythrobacter sp. (strain OCh 114)).